A 198-amino-acid polypeptide reads, in one-letter code: UPF0301 protein Tfu_2389 (198 aa).

Belongs to the UPF0301 (AlgH) family.

The sequence is that of UPF0301 protein Tfu_2389 from Thermobifida fusca (strain YX).